A 126-amino-acid chain; its full sequence is Large ribosomal subunit protein bL19 (126 aa).

Belongs to the bacterial ribosomal protein bL19 family.

In terms of biological role, this protein is located at the 30S-50S ribosomal subunit interface and may play a role in the structure and function of the aminoacyl-tRNA binding site. The polypeptide is Large ribosomal subunit protein bL19 (Prochlorococcus marinus (strain MIT 9312)).